The chain runs to 149 residues: Endothelin-1 (149 aa).

The propeptide occupies Ala-1–Ser-33. The tract at residues Val-6–Ala-26 is disordered. Disulfide bonds link Cys-36/Cys-50 and Cys-38/Cys-46. Positions Val-57–Lys-149 are excised as a propeptide. The interval Cys-93–Cys-107 is endothelin-like.

This sequence belongs to the endothelin/sarafotoxin family.

Its subcellular location is the secreted. Functionally, endothelins are endothelium-derived vasoconstrictor peptides. Probable ligand for G-protein coupled receptors EDNRA and EDNRB which activates PTK2B, BCAR1, BCAR3 and, GTPases RAP1 and RHOA cascade in glomerular mesangial cells. Also binds the DEAR/FBXW7-AS1 receptor. Promotes mesenteric arterial wall remodeling via activation of ROCK signaling and subsequent colocalization of NFATC3 with F-actin filaments. NFATC3 then translocates to the nucleus where it subsequently promotes the transcription of the smooth muscle hypertrophy and differentiation marker ACTA2. The sequence is that of Endothelin-1 (EDN1) from Cavia porcellus (Guinea pig).